We begin with the raw amino-acid sequence, 267 residues long: uncharacterized protein (267 aa).

The stretch at 37–62 (DSSNNYKKKYKKYKRKYIDLKKQLNY) forms a coiled coil.

This is an uncharacterized protein from Acanthamoeba polyphaga (Amoeba).